The primary structure comprises 445 residues: Trigger factor (445 aa).

In terms of domain architecture, PPIase FKBP-type spans 162–247 (GDQVTIDAIG…IKAVHTAEPT (86 aa)).

This sequence belongs to the FKBP-type PPIase family. Tig subfamily.

The protein localises to the cytoplasm. It carries out the reaction [protein]-peptidylproline (omega=180) = [protein]-peptidylproline (omega=0). Its function is as follows. Involved in protein export. Acts as a chaperone by maintaining the newly synthesized protein in an open conformation. Functions as a peptidyl-prolyl cis-trans isomerase. The protein is Trigger factor of Rickettsia akari (strain Hartford).